The primary structure comprises 429 residues: tRNA (guanine(9)-N1)-methyltransferase (429 aa).

The SAM-dependent MTase TRM10-type domain occupies 131-379 (KERKEAQRRI…AVIPIRKYAP (249 aa)). Residues 285–286 (LS), G305, 309–313 (DRNRH), C317, L331, and 344–346 (KAL) each bind S-adenosyl-L-methionine. D309 (proton acceptor) is an active-site residue. Residues 383 to 429 (AKRAKTETKRNEKVEEEVECTSAEGEEDIGVIEESAEVDPEDVFSNQ) form a disordered region. Basic and acidic residues predominate over residues 386 to 395 (AKTETKRNEK). Positions 396-429 (VEEEVECTSAEGEEDIGVIEESAEVDPEDVFSNQ) are enriched in acidic residues.

This sequence belongs to the class IV-like SAM-binding methyltransferase superfamily. TRM10 family. Monomer.

The protein resides in the cytoplasm. It is found in the nucleus. It catalyses the reaction guanosine(9) in tRNA + S-adenosyl-L-methionine = N(1)-methylguanosine(9) in tRNA + S-adenosyl-L-homocysteine + H(+). Functionally, S-adenosyl-L-methionine-dependent guanine N(1)-methyltransferase that catalyzes the formation of N(1)-methylguanine at position 9 (m1G9) in cytoplasmic tRNA. This chain is tRNA (guanine(9)-N1)-methyltransferase, found in Cryptococcus neoformans var. neoformans serotype D (strain B-3501A) (Filobasidiella neoformans).